A 120-amino-acid chain; its full sequence is Large ribosomal subunit protein uL18 (120 aa).

It belongs to the universal ribosomal protein uL18 family. Part of the 50S ribosomal subunit; part of the 5S rRNA/L5/L18/L25 subcomplex. Contacts the 5S and 23S rRNAs.

In terms of biological role, this is one of the proteins that bind and probably mediate the attachment of the 5S RNA into the large ribosomal subunit, where it forms part of the central protuberance. In Chloroflexus aggregans (strain MD-66 / DSM 9485), this protein is Large ribosomal subunit protein uL18.